The sequence spans 291 residues: Beta-lactamase CTX-M-4 (291 aa).

Residues 1-28 (MMTQSIRRSMLTVMATLPLLFSSATLHA) form the signal peptide. Catalysis depends on Ser73, which acts as the Acyl-ester intermediate. A substrate-binding site is contributed by 237–239 (KTG).

Belongs to the class-A beta-lactamase family.

It catalyses the reaction a beta-lactam + H2O = a substituted beta-amino acid. Functionally, has cefotaxime-hydrolyzing activity. The chain is Beta-lactamase CTX-M-4 (bla) from Salmonella typhimurium.